The primary structure comprises 469 residues: Gustatory receptor for sugar taste 64f (469 aa).

Residues 1–117 lie on the Cytoplasmic side of the membrane; it reads MKILPKLERK…SFSWRNIRTC (117 aa). A helical transmembrane segment spans residues 118 to 138; that stretch reads FSLLFIASSLANFGLSLFKVL. Topologically, residues 139 to 146 are extracellular; the sequence is NNPISFNS. A helical membrane pass occupies residues 147–167; that stretch reads IKPIIFRGSVLLVLIVALNLA. Residues 168–199 lie on the Cytoplasmic side of the membrane; the sequence is RQWPQLMMYWHTVEKDLPQYKTQLTKWKMGHT. The chain crosses the membrane as a helical span at residues 200–220; that stretch reads ISMVMLLGMMLSFAEHILSMV. At 221-265 the chain is on the extracellular side; it reads SAINYASFCNRTADPIQNYFLRTNDEIFFVTSYSTTLALWGKFQN. A glycan (N-linked (GlcNAc...) asparagine) is linked at Asn-230. Residues 266–286 form a helical membrane-spanning segment; it reads VFSTFIWNYMDLFVMIVSIGL. Over 287–330 the chain is Cytoplasmic; it reads ASKFRQLNDDLRNFKGMNMAPSYWSERRIQYRNICILCDKMDDA. The helical transmembrane segment at 331-351 threads the bilayer; that stretch reads ISLITMVSFSNNLYFICVQLL. The Extracellular segment spans residues 352-353; it reads RS. A helical membrane pass occupies residues 354–374; it reads LNTMPSVAHAVYFYFSLIFLI. The Cytoplasmic portion of the chain corresponds to 375-435; sequence GRTLAVSLYS…GMKFFHLTRK (61 aa). Residues 436-456 form a helical membrane-spanning segment; sequence LVLSVAGTIVTYELVLIQFHE. The Extracellular segment spans residues 457 to 469; it reads DNDLWDCDQSYYS.

This sequence belongs to the insect chemoreceptor superfamily. Gustatory receptor (GR) family. Gr5a subfamily. In terms of tissue distribution, expressed in Gr5a-expressing sugar-sensing cells.

Its subcellular location is the cell membrane. In terms of biological role, one of the few identified sugar gustatory receptors identified so far and which promotes the starvation-induced increase of feeding motivation. Required in combination with Gr64a to detect sucrose, maltose, and glucose. The chain is Gustatory receptor for sugar taste 64f (Gr64f) from Drosophila melanogaster (Fruit fly).